We begin with the raw amino-acid sequence, 295 residues long: Indole-3-glycerol phosphate synthase (295 aa).

The protein belongs to the TrpC family.

The enzyme catalyses 1-(2-carboxyphenylamino)-1-deoxy-D-ribulose 5-phosphate + H(+) = (1S,2R)-1-C-(indol-3-yl)glycerol 3-phosphate + CO2 + H2O. It functions in the pathway amino-acid biosynthesis; L-tryptophan biosynthesis; L-tryptophan from chorismate: step 4/5. This chain is Indole-3-glycerol phosphate synthase, found in Prochlorococcus marinus (strain MIT 9211).